The primary structure comprises 1146 residues: Ankyrin repeat domain-containing protein 24 (1146 aa).

5 ANK repeats span residues 81–110, 114–143, 147–176, 180–209, and 213–242; these read EGKS…NVMS, AGYN…VVDV, SGWT…HLNP, SGAT…AAND, and QGRT…QPGI. Disordered regions lie at residues 272-320, 607-627, and 766-785; these read RPSP…PDDR, REME…GAQA, and ERVR…GDTT. The span at 286–297 shows a compositional bias: polar residues; that stretch reads EASSQNSMSSHG. Residues 320–517 are a coiled coil; the sequence is RDAYEEIVRL…QALRQQETRE (198 aa). The stretch at 714-1110 forms a coiled coil; sequence AAEASEKLQV…AARDHSSVVA (397 aa).

Homodimer. Interacts (via C-terminal domain) with TRIOBP (via C-terminal domain) isoform 4; recruits TRIOBP isoform 4 to stereocilia rootlets.

The protein resides in the cell membrane. The protein localises to the cell projection. Its subcellular location is the stereocilium. Its function is as follows. Component of the stereocilia rootlet in hair cells of inner ear. Bridges the apical plasma membrane with the lower rootlet and maintains normal distribution of TRIOBP, thereby reinforcing stereocilia insertion points and organizing rootlets for hearing with long-term resilience. This is Ankyrin repeat domain-containing protein 24 from Homo sapiens (Human).